A 335-amino-acid chain; its full sequence is Twinfilin (335 aa).

ADF-H domains are found at residues 4–140 (SSGI…QHKL) and 176–316 (GISF…NELH). Residues 307–335 (SEESIINELHPPKVEEKKAFSKPSRPGRK) form a disordered region. A compositionally biased stretch (basic and acidic residues) spans 316–325 (HPPKVEEKKA).

The protein belongs to the actin-binding proteins ADF family. Twinfilin subfamily. Interacts with G-actin; ADP-actin form.

It is found in the cytoplasm. The protein localises to the cytoskeleton. Its subcellular location is the cell cortex. In terms of biological role, actin-binding protein involved in motile and morphological processes. Inhibits actin polymerization, likely by sequestering G-actin. The sequence is that of Twinfilin (twfA) from Dictyostelium discoideum (Social amoeba).